The sequence spans 111 residues: Small ribosomal subunit protein uS10 (111 aa).

This sequence belongs to the universal ribosomal protein uS10 family. In terms of assembly, part of the 30S ribosomal subunit.

Involved in the binding of tRNA to the ribosomes. This is Small ribosomal subunit protein uS10 from Ehrlichia ruminantium (strain Welgevonden).